Here is a 140-residue protein sequence, read N- to C-terminus: Histone H2B (140 aa).

The segment covering 1–10 (MPPKAAEKKP) has biased composition (basic and acidic residues). The segment at 1–48 (MPPKAAEKKPSTGGKAPAGKAPAEKKEAGKKTAAAASGEKKKRGKTRK) is disordered. 2 positions are modified to N6-acetyllysine; alternate: Lys8 and Lys9. Glycyl lysine isopeptide (Lys-Gly) (interchain with G-Cter in SUMO); alternate cross-links involve residues Lys8 and Lys9. A compositionally biased stretch (low complexity) spans 11 to 21 (STGGKAPAGKA). At Lys15 the chain carries N6-acetyllysine. An N6-acetyllysine; alternate modification is found at Lys25. A Glycyl lysine isopeptide (Lys-Gly) (interchain with G-Cter in SUMO); alternate cross-link involves residue Lys25. Residue Lys26 forms a Glycyl lysine isopeptide (Lys-Gly) (interchain with G-Cter in SUMO) linkage. Lys134 participates in a covalent cross-link: Glycyl lysine isopeptide (Lys-Gly) (interchain with G-Cter in ubiquitin).

It belongs to the histone H2B family. The nucleosome is a histone octamer containing two molecules each of H2A, H2B, H3 and H4 assembled in one H3-H4 heterotetramer and two H2A-H2B heterodimers. The octamer wraps approximately 147 bp of DNA. Monoubiquitinated by the ubc2-bre1 complex to form H2BK123ub1. H2BK123ub1 gives a specific tag for epigenetic transcriptional activation and is also prerequisite for H3K4me and H3K79me formation. H2BK123ub1 also modulates the formation of double-strand breaks during meiosis and is a prerequisite for DNA-damage checkpoint activation. Post-translationally, acetylated by gcn5 to form H2BK11ac and H2BK16ac. H2BK16ac can also be formed by esa1. Acetylation of N-terminal lysines and particularly formation of H2BK11acK16ac has a positive effect on transcription. In terms of processing, sumoylation to form H2BK6su or H2BK7su, and probably also H2BK16su or H2BK17su, occurs preferentially near the telomeres and represses gene transcription.

Its subcellular location is the nucleus. The protein resides in the chromosome. Its function is as follows. Core component of nucleosome. Nucleosomes wrap and compact DNA into chromatin, limiting DNA accessibility to the cellular machineries which require DNA as a template. Histones thereby play a central role in transcription regulation, DNA repair, DNA replication and chromosomal stability. DNA accessibility is regulated via a complex set of post-translational modifications of histones, also called histone code, and nucleosome remodeling. The protein is Histone H2B (htbA) of Emericella nidulans (strain FGSC A4 / ATCC 38163 / CBS 112.46 / NRRL 194 / M139) (Aspergillus nidulans).